The following is a 157-amino-acid chain: CASP-like protein 1 (157 aa).

Over 1 to 13 (MKTEARDGGSEWR) the chain is Cytoplasmic. Residues 14–34 (WVAIFELFLRLAAIVSTSVAV) traverse the membrane as a helical segment. The Extracellular portion of the chain corresponds to 35 to 40 (YAAMGK). The chain crosses the membrane as a helical span at residues 41-61 (IFVVAVNGVACFYLLMSLPVS). Topologically, residues 62–82 (IFNIMRPHAYPANRVFLNIMD) are cytoplasmic. A helical transmembrane segment spans residues 83-103 (MVMVALVTAGALAAGIVYLVE). Topologically, residues 104 to 121 (KAGNARASWVSVWSQFDS) are extracellular. A helical membrane pass occupies residues 122–142 (SSCFAVLALILHVLLSGVILY). Residues 143–157 (KQALNIKFKKLDSVD) lie on the Cytoplasmic side of the membrane.

This sequence belongs to the Casparian strip membrane proteins (CASP) family. As to quaternary structure, homodimer and heterodimers.

It localises to the cell membrane. This chain is CASP-like protein 1, found in Picea sitchensis (Sitka spruce).